The sequence spans 350 residues: Phosphotriesterase-related protein (350 aa).

A divalent metal cation-binding residues include His-22, His-24, Glu-169, His-201, His-230, and Asp-298.

It belongs to the metallo-dependent hydrolases superfamily. Phosphotriesterase family. A divalent metal cation is required as a cofactor.

The sequence is that of Phosphotriesterase-related protein from Drosophila ananassae (Fruit fly).